A 548-amino-acid polypeptide reads, in one-letter code: Chaperonin GroEL (548 aa).

Residues 30–33 (TLGP), Lys-51, 87–91 (DGTTT), Gly-415, 479–481 (NAA), and Asp-495 contribute to the ATP site.

The protein belongs to the chaperonin (HSP60) family. Forms a cylinder of 14 subunits composed of two heptameric rings stacked back-to-back. Interacts with the co-chaperonin GroES.

It localises to the cytoplasm. The enzyme catalyses ATP + H2O + a folded polypeptide = ADP + phosphate + an unfolded polypeptide.. Together with its co-chaperonin GroES, plays an essential role in assisting protein folding. The GroEL-GroES system forms a nano-cage that allows encapsulation of the non-native substrate proteins and provides a physical environment optimized to promote and accelerate protein folding. The polypeptide is Chaperonin GroEL (Klebsiella aerogenes (strain ATCC 13048 / DSM 30053 / CCUG 1429 / JCM 1235 / KCTC 2190 / NBRC 13534 / NCIMB 10102 / NCTC 10006 / CDC 819-56) (Enterobacter aerogenes)).